Reading from the N-terminus, the 148-residue chain is uncharacterized protein (148 aa).

A compositionally biased stretch (low complexity) spans 65–79 (VDSTPSVDSTGSTSD). A disordered region spans residues 65 to 85 (VDSTPSVDSTGSTSDVVDDRG).

This is an uncharacterized protein from Saccharomyces cerevisiae (strain ATCC 204508 / S288c) (Baker's yeast).